A 212-amino-acid chain; its full sequence is Endoplasmic reticulum vesicle protein 25 (212 aa).

The signal sequence occupies residues 1–21 (MKSFAACVLLLCALFFEQVFA). The Lumenal portion of the chain corresponds to 22–181 (VRFDIPASTK…TNESTNRRVR (160 aa)). The GOLD domain maps to 34-122 (QVCIRDFVSE…SRSIELDIES (89 aa)). Residues 182 to 202 (NFSIAVIVVLVALGAWQVNYM) form a helical membrane-spanning segment. Topologically, residues 203–212 (KNFFRAKHII) are cytoplasmic.

This sequence belongs to the EMP24/GP25L family.

The protein localises to the endoplasmic reticulum membrane. Its subcellular location is the golgi apparatus membrane. Constituent of COPII-coated endoplasmic reticulum-derived transport vesicles. Required for efficient transport of a subset of secretory proteins to the Golgi. Facilitates retrograde transport from the Golgi to the endoplasmic reticulum. This chain is Endoplasmic reticulum vesicle protein 25 (ERV25), found in Kluyveromyces lactis (strain ATCC 8585 / CBS 2359 / DSM 70799 / NBRC 1267 / NRRL Y-1140 / WM37) (Yeast).